We begin with the raw amino-acid sequence, 200 residues long: Superoxide dismutase [Mn], mitochondrial (200 aa).

4 residues coordinate Mn(2+): His27, His72, Asp157, and His161.

Belongs to the iron/manganese superoxide dismutase family. The cofactor is Mn(2+).

The protein resides in the mitochondrion matrix. The catalysed reaction is 2 superoxide + 2 H(+) = H2O2 + O2. Destroys superoxide anion radicals which are normally produced within the cells and which are toxic to biological systems. The chain is Superoxide dismutase [Mn], mitochondrial (sod) from Agaricus bisporus (White button mushroom).